We begin with the raw amino-acid sequence, 193 residues long: ATP-dependent protease subunit HslV (193 aa).

Residue Thr12 is part of the active site. Na(+)-binding residues include Ala167, Cys170, and Thr173.

The protein belongs to the peptidase T1B family. HslV subfamily. As to quaternary structure, a double ring-shaped homohexamer of HslV is capped on each side by a ring-shaped HslU homohexamer. The assembly of the HslU/HslV complex is dependent on binding of ATP.

It localises to the cytoplasm. It carries out the reaction ATP-dependent cleavage of peptide bonds with broad specificity.. With respect to regulation, allosterically activated by HslU binding. Protease subunit of a proteasome-like degradation complex believed to be a general protein degrading machinery. This Bartonella quintana (strain Toulouse) (Rochalimaea quintana) protein is ATP-dependent protease subunit HslV.